The chain runs to 359 residues: Type-1 angiotensin II receptor A (359 aa).

At 1–25 (MALNSSTEDGIKRIQDDCPRAGRHS) the chain is on the extracellular side. The N-linked (GlcNAc...) asparagine glycan is linked to Asn4. Positions 15 and 17 each coordinate angiotensin II. 2 disulfides stabilise this stretch: Cys18–Cys274 and Cys101–Cys180. The chain crosses the membrane as a helical span at residues 26–55 (YIFVMIPTLYSIIFVVGIFGNSLVVIVIYF). Topologically, residues 56-61 (YMKLKT) are cytoplasmic. A helical transmembrane segment spans residues 62–89 (VASVFLLNLALADLCFLLTLPLWAVYTA). Over 90–98 (MEYRWPFGN) the chain is Extracellular. A helical membrane pass occupies residues 99–125 (HLCKIASASVSFNLYASVFLLTCLSID). The Cytoplasmic portion of the chain corresponds to 126–141 (RYLAIVHPMKSRLRRT). The chain crosses the membrane as a helical span at residues 142–165 (MLVAKVTCIIIWLMAGLASLPAVI). Over 166–190 (HRNVYFIENTNITVCAFHYESRNST) the chain is Extracellular. Arg167 provides a ligand contact to angiotensin II. A glycan (N-linked (GlcNAc...) asparagine) is linked at Asn176. Angiotensin II-binding residues include Phe182, His183, and Tyr184. N-linked (GlcNAc...) asparagine glycosylation is present at Asn188. Residues 191–216 (LPIGLGLTKNILGFLFPFLIILTSYT) form a helical membrane-spanning segment. Lys199 lines the angiotensin II pocket. The Cytoplasmic segment spans residues 217 to 239 (LIWKALKKAYEIQKNKPRNDDIF). Residues 240 to 268 (RIIMAIVLFFFFSWVPHQIFTFLDVLIQL) traverse the membrane as a helical segment. The Extracellular portion of the chain corresponds to 269 to 278 (GVIHDCKIAD). The chain crosses the membrane as a helical span at residues 279 to 304 (IVDTAMPITICIAYFNNCLNPLFYGF). The Cytoplasmic segment spans residues 305 to 359 (LGKKFKKYFLQLLKYIPPKAKSHSSLSTKMSTLSYRPSDNMSSAAKKPASCSEVE). Residues 335–347 (STLSYRPSDNMSS) show a composition bias toward polar residues. The tract at residues 335–359 (STLSYRPSDNMSSAAKKPASCSEVE) is disordered. Cys355 carries S-palmitoyl cysteine lipidation.

This sequence belongs to the G-protein coupled receptor 1 family. As to quaternary structure, interacts with MAS1. Interacts with ARRB1. Interacts with FLNA (via filamin repeat 21); increases PKA-mediated phosphorylation of FLNA. In terms of processing, C-terminal Ser or Thr residues may be phosphorylated.

It localises to the cell membrane. Receptor for angiotensin II, a vasoconstricting peptide, which acts as a key regulator of blood pressure and sodium retention by the kidney. The activated receptor in turn couples to G-alpha proteins G(q) (GNAQ, GNA11, GNA14 or GNA15) and thus activates phospholipase C and increases the cytosolic Ca(2+) concentrations, which in turn triggers cellular responses such as stimulation of protein kinase C. In Mus musculus (Mouse), this protein is Type-1 angiotensin II receptor A (Agtr1a).